The chain runs to 80 residues: MMKLALFSIIVILFSLIGSIHGADVPGNYPLDSSGNKYPCTVLGDNQSCIDVCKKHGVKYGYCYSFKCWCEFLEDKNVSI.

Residues 1–22 (MMKLALFSIIVILFSLIGSIHG) form the signal peptide. In terms of domain architecture, LCN-type CS-alpha/beta spans 25 to 80 (VPGNYPLDSSGNKYPCTVLGDNQSCIDVCKKHGVKYGYCYSFKCWCEFLEDKNVSI). 3 disulfide bridges follow: cysteine 40/cysteine 63, cysteine 49/cysteine 68, and cysteine 53/cysteine 70.

Expressed by the venom gland.

Its subcellular location is the secreted. Functionally, probable neurotoxin that inhibits ion channels. Is toxic to mice. Is about 2.8% of the total protein in the venom. This chain is Toxin Acra I-2, found in Androctonus crassicauda (Arabian fat-tailed scorpion).